The chain runs to 530 residues: Ubiquitin carboxyl-terminal hydrolase 17-like protein 5 (530 aa).

Positions 80-375 constitute a USP domain; sequence AGLQNMGNTC…QAYVLFYIQK (296 aa). Catalysis depends on C89, which acts as the Nucleophile. H334 serves as the catalytic Proton acceptor. 2 stretches are compositionally biased toward basic and acidic residues: residues 382 to 392 and 398 to 412; these read SESVSRGREPR and DTDRRATQGELKRDH. Disordered regions lie at residues 382–412 and 477–530; these read SESVSRGREPRALGAEDTDRRATQGELKRDH and NHHP…LVCQ. A compositionally biased stretch (polar residues) spans 493–505; it reads TPTHQESMNTGTL. A compositionally biased stretch (basic residues) spans 510-524; the sequence is GRARRSKGKNKHSKR.

This sequence belongs to the peptidase C19 family. USP17 subfamily.

The protein localises to the nucleus. The protein resides in the endoplasmic reticulum. It catalyses the reaction Thiol-dependent hydrolysis of ester, thioester, amide, peptide and isopeptide bonds formed by the C-terminal Gly of ubiquitin (a 76-residue protein attached to proteins as an intracellular targeting signal).. Deubiquitinating enzyme that removes conjugated ubiquitin from specific proteins to regulate different cellular processes that may include cell proliferation, progression through the cell cycle, apoptosis, cell migration, and the cellular response to viral infection. The protein is Ubiquitin carboxyl-terminal hydrolase 17-like protein 5 (USP17L5) of Homo sapiens (Human).